Here is a 364-residue protein sequence, read N- to C-terminus: Cell cycle control protein 50A (364 aa).

The tract at residues 1–28 (MAMNYSAKDEVDGGPAGPPGGAAKTRRP) is disordered. The residue at position 2 (Ala-2) is an N-acetylalanine. The Cytoplasmic segment spans residues 2 to 49 (AMNYSAKDEVDGGPAGPPGGAAKTRRPDNTAFKQQRLPAWQPILTAGT). Residues 50-70 (VLPTFFIIGLIFIPIGIGIFV) form a helical membrane-spanning segment. The Exoplasmic loop portion of the chain corresponds to 71 to 328 (TSNNIREIEI…SWMGGKNPFL (258 aa)). 3 cysteine pairs are disulfide-bonded: Cys-91-Cys-104, Cys-94-Cys-102, and Cys-157-Cys-171. Asn-98 carries an N-linked (GlcNAc...) asparagine glycan. Asn-297 carries N-linked (GlcNAc...) asparagine glycosylation. Residues 329-349 (GIAYITIGSISFLLGVVLLVI) form a helical membrane-spanning segment. Over 350-364 (NHKYRNSSNTADITI) the chain is Cytoplasmic.

This sequence belongs to the CDC50/LEM3 family. As to quaternary structure, component of various P4-ATPase flippase complexes which consists of a catalytic alpha subunit and an accessory beta subunit. Interacts with ATP8A1 to form a flippase complex; this complex forms an intermediate phosphoenzyme. The ATP8A2:TMEM30A flippase complex has been purified, and ATP8B1:TMEM30A and ATP8B2:TMEM30A flippase complexes have been shown to form intermediate phosphoenzymes in vitro. Interacts with alpha subunits ATP8A1, ATP8B1, ATP8B2, ATP8B4, ATP10A, ATP10B, ATP10D, ATP11A, ATP11B and ATP11C. N-glycosylated. Contains high mannose-type oligosaccharides. Expressed in photoreceptor cells; detected in retina outer segment (at protein level). Detected in hepatocytes liver sinusoidal endothelial cells and kidney brush border of the proximal tubules (at protein level). Expressed in brain (at protein level).

The protein localises to the membrane. It is found in the cell membrane. It localises to the golgi apparatus. The protein resides in the cytoplasmic vesicle. Its subcellular location is the secretory vesicle membrane. The protein localises to the apical cell membrane. Its function is as follows. Accessory component of a P4-ATPase flippase complex which catalyzes the hydrolysis of ATP coupled to the transport of aminophospholipids from the outer to the inner leaflet of various membranes and ensures the maintenance of asymmetric distribution of phospholipids. Phospholipid translocation also seems to be implicated in vesicle formation and in uptake of lipid signaling molecules. The beta subunit may assist in binding of the phospholipid substrate. Required for the proper folding, assembly and ER to Golgi exit of the ATP8A2:TMEM30A flippase complex. ATP8A2:TMEM30A may be involved in regulation of neurite outgrowth, and, reconstituted to liposomes, predomiminantly transports phosphatidylserine (PS) and to a lesser extent phosphatidylethanolamine (PE). The ATP8A1:TMEM30A flippase complex seems to play a role in regulation of cell migration probably involving flippase-mediated translocation of phosphatidylethanolamine (PE) at the plasma membrane. Required for the formation of the ATP8A2, ATP8B1 and ATP8B2 P-type ATPAse intermediate phosphoenzymes. Involved in uptake of platelet-activating factor (PAF). Can also mediate the export of alpha subunits ATP8A1, ATP8B1, ATP8B2, ATP8B4, ATP10A, ATP10B, ATP10D, ATP11A, ATP11B and ATP11C from the ER to other membrane localizations. The sequence is that of Cell cycle control protein 50A from Mus musculus (Mouse).